Here is a 254-residue protein sequence, read N- to C-terminus: Putative electron transfer flavoprotein subunit YdiQ (254 aa).

Belongs to the ETF beta-subunit/FixA family. As to quaternary structure, ydiR and YdiQ form a heterodimer.

Functionally, may play a role in a redox process. In Escherichia coli (strain K12), this protein is Putative electron transfer flavoprotein subunit YdiQ (ydiQ).